The sequence spans 262 residues: MVRGPKKHLKRVAAPHHWLLDKLSGTYAPKPSPGPHKARECLPLIVFLRNRLKYALNGREVKAILMQRLIKVDGKVRTDSTFPTGFMDVISVDKTGEHFRLVYDIKGRFTVHRITAEEAKYKLCKVKRVQLGAKGVPFLVTHDGRTIRYPDPLIKVNDTIKLNLETNKIESFIKFDTSAQVMVTGGRNMGRVGTIVHREHHLGSFEIIHVKDALDREFATRLSNVFVIGETGKSWISLPKGKGVKLSITEERDRRRALKGLA.

The 64-residue stretch at 42-105 (LPLIVFLRNR…GEHFRLVYDI (64 aa)) folds into the S4 RNA-binding domain. Residue Thr194 is modified to Phosphothreonine.

It belongs to the eukaryotic ribosomal protein eS4 family. Component of the small ribosomal subunit (SSU). Mature yeast ribosomes consist of a small (40S) and a large (60S) subunit. The 40S small subunit contains 1 molecule of ribosomal RNA (18S rRNA) and at least 33 different proteins. The large 60S subunit contains 3 rRNA molecules (25S, 5.8S and 5S rRNA) and at least 46 different proteins.

It is found in the cytoplasm. Component of the ribosome, a large ribonucleoprotein complex responsible for the synthesis of proteins in the cell. The small ribosomal subunit (SSU) binds messenger RNAs (mRNAs) and translates the encoded message by selecting cognate aminoacyl-transfer RNA (tRNA) molecules. The large subunit (LSU) contains the ribosomal catalytic site termed the peptidyl transferase center (PTC), which catalyzes the formation of peptide bonds, thereby polymerizing the amino acids delivered by tRNAs into a polypeptide chain. The nascent polypeptides leave the ribosome through a tunnel in the LSU and interact with protein factors that function in enzymatic processing, targeting, and the membrane insertion of nascent chains at the exit of the ribosomal tunnel. This chain is Small ribosomal subunit protein eS4C (rps403), found in Schizosaccharomyces pombe (strain 972 / ATCC 24843) (Fission yeast).